Reading from the N-terminus, the 100-residue chain is Urease subunit gamma (100 aa).

It belongs to the urease gamma subunit family. In terms of assembly, heterotrimer of UreA (gamma), UreB (beta) and UreC (alpha) subunits. Three heterotrimers associate to form the active enzyme.

It is found in the cytoplasm. The enzyme catalyses urea + 2 H2O + H(+) = hydrogencarbonate + 2 NH4(+). It functions in the pathway nitrogen metabolism; urea degradation; CO(2) and NH(3) from urea (urease route): step 1/1. This Methylocella silvestris (strain DSM 15510 / CIP 108128 / LMG 27833 / NCIMB 13906 / BL2) protein is Urease subunit gamma.